A 201-amino-acid polypeptide reads, in one-letter code: Recombination protein RecR (201 aa).

The C4-type zinc-finger motif lies at 57–72 (CADCRTFTEQEVCNIC). The region spanning 81–176 (GQICVVESPA…EASRIAHGVP (96 aa)) is the Toprim domain.

It belongs to the RecR family.

Functionally, may play a role in DNA repair. It seems to be involved in an RecBC-independent recombinational process of DNA repair. It may act with RecF and RecO. This chain is Recombination protein RecR, found in Salmonella arizonae (strain ATCC BAA-731 / CDC346-86 / RSK2980).